A 365-amino-acid polypeptide reads, in one-letter code: Cobalt-precorrin-5B C(1)-methyltransferase (365 aa).

Belongs to the CbiD family.

The catalysed reaction is Co-precorrin-5B + S-adenosyl-L-methionine = Co-precorrin-6A + S-adenosyl-L-homocysteine. It functions in the pathway cofactor biosynthesis; adenosylcobalamin biosynthesis; cob(II)yrinate a,c-diamide from sirohydrochlorin (anaerobic route): step 6/10. Its function is as follows. Catalyzes the methylation of C-1 in cobalt-precorrin-5B to form cobalt-precorrin-6A. The chain is Cobalt-precorrin-5B C(1)-methyltransferase from Moorella thermoacetica (strain ATCC 39073 / JCM 9320).